A 348-amino-acid polypeptide reads, in one-letter code: Histidinol-phosphate aminotransferase (348 aa).

N6-(pyridoxal phosphate)lysine is present on Lys211.

Belongs to the class-II pyridoxal-phosphate-dependent aminotransferase family. Histidinol-phosphate aminotransferase subfamily. Homodimer. Requires pyridoxal 5'-phosphate as cofactor.

The catalysed reaction is L-histidinol phosphate + 2-oxoglutarate = 3-(imidazol-4-yl)-2-oxopropyl phosphate + L-glutamate. It participates in amino-acid biosynthesis; L-histidine biosynthesis; L-histidine from 5-phospho-alpha-D-ribose 1-diphosphate: step 7/9. The polypeptide is Histidinol-phosphate aminotransferase (Chlorobaculum tepidum (strain ATCC 49652 / DSM 12025 / NBRC 103806 / TLS) (Chlorobium tepidum)).